We begin with the raw amino-acid sequence, 254 residues long: Large ribosomal subunit protein uL2 (254 aa).

Belongs to the universal ribosomal protein uL2 family.

The sequence is that of Large ribosomal subunit protein uL2 (RPL2) from Eremothecium gossypii (strain ATCC 10895 / CBS 109.51 / FGSC 9923 / NRRL Y-1056) (Yeast).